Reading from the N-terminus, the 1310-residue chain is PAN2-PAN3 deadenylation complex catalytic subunit pan2 (1310 aa).

WD repeat units follow at residues 22–61 (YHAG…RFTA), 67–105 (ETDG…SIRH), 106–144 (ESMQ…GEVV), and 145–184 (KELP…IKKQ). The segment at 318 to 463 (QFTEIGIPPR…NNDHWSLRPE (146 aa)) is linker. Residues 463–850 (EAPPEYRICE…MPVVVMFQVK (388 aa)) enclose the USP domain. Zn(2+)-binding residues include H525, C530, C535, C538, C645, C648, C700, and C703. An Exonuclease domain is found at 897–1070 (IAIDTEFIRL…EDAQTALKLY (174 aa)). Residues D900, E902, D1009, and D1062 each coordinate a divalent metal cation. The segment at 1121–1169 (TPPVPAPGTTEGSFEISNSSTATTGGSALSATGGMGSASASSSMPSTPV) is disordered. Low complexity predominate over residues 1139-1168 (SSTATTGGSALSATGGMGSASASSSMPSTP).

It belongs to the peptidase C19 family. PAN2 subfamily. Forms a heterotrimer with an asymmetric homodimer of the regulatory subunit par-2/pan3 to form the poly(A)-nuclease (PAN) deadenylation complex. Requires a divalent metal cation as cofactor.

It is found in the cytoplasm. The enzyme catalyses Exonucleolytic cleavage of poly(A) to 5'-AMP.. With respect to regulation, positively regulated by the regulatory subunit par-2/pan3. In terms of biological role, catalytic subunit of the poly(A)-nuclease (PAN) deadenylation complex, one of two cytoplasmic mRNA deadenylases involved in mRNA turnover. PAN specifically shortens poly(A) tails of RNA and the activity is stimulated by poly(A)-binding protein pabp-1. PAN deadenylation is followed by rapid degradation of the shortened mRNA tails by the CCR4-NOT complex. Deadenylated mRNAs are then degraded by two alternative mechanisms, namely exosome-mediated 3'-5' exonucleolytic degradation, or deadenylation-dependent mRNA decaping and subsequent 5'-3' exonucleolytic degradation by rgb-30/xrn1. May also be involved in post-transcriptional maturation of mRNA poly(A) tails. The chain is PAN2-PAN3 deadenylation complex catalytic subunit pan2 (par-1) from Neurospora crassa (strain ATCC 24698 / 74-OR23-1A / CBS 708.71 / DSM 1257 / FGSC 987).